We begin with the raw amino-acid sequence, 57 residues long: uncharacterized protein (57 aa).

A helical transmembrane segment spans residues 34 to 54; it reads AALLDAAALVVIPGLLTVAAV.

It is found in the membrane. This is an uncharacterized protein from Dictyostelium discoideum (Social amoeba).